Consider the following 104-residue polypeptide: L-rhamnose mutarotase (104 aa).

Substrate is bound at residue Y18. H22 acts as the Proton donor in catalysis. Residues Y41 and 76 to 77 (WW) contribute to the substrate site.

This sequence belongs to the rhamnose mutarotase family. In terms of assembly, homodimer.

It localises to the cytoplasm. The catalysed reaction is alpha-L-rhamnose = beta-L-rhamnose. It participates in carbohydrate metabolism; L-rhamnose metabolism. In terms of biological role, involved in the anomeric conversion of L-rhamnose. The chain is L-rhamnose mutarotase from Shouchella clausii (strain KSM-K16) (Alkalihalobacillus clausii).